A 365-amino-acid polypeptide reads, in one-letter code: MNILKISKQTLTNNIKIIREYVGNAKICFPVKANAYGHGIEEIVENTHDLVDFFAVANSLEAFRVTAITKKPVLVFGVIYYEYLERMVSENIRVSIQDYDDIEKLEQIAKELNKKIYVHINVNTGMNRMGVCYNDVCRTIKRAYNSKWIILEGVYSHLACADNRDHPTNAKQKKRFSEIVEYAKELSQDIICHLSNSYGFLGDKEICYDMVRPGILIYGFLPEFYVERSIREIKPIARLLSKVVKIIELEEGDGVGYSMIYRGFDGEKVAVIPIGYGDGFPRELGDRGFVNIDNVMYPMAGRMSMDGLTVSLGHNEHNVKVGDVVELISDIPRNRNSAFLMAKQVNTIEYDIMSTLNDRIIREVI.

The active-site Proton acceptor; specific for D-alanine is K32. K32 is modified (N6-(pyridoxal phosphate)lysine). Residue R128 coordinates substrate. Y257 serves as the catalytic Proton acceptor; specific for L-alanine. Residue M305 participates in substrate binding.

This sequence belongs to the alanine racemase family. It depends on pyridoxal 5'-phosphate as a cofactor.

It catalyses the reaction L-alanine = D-alanine. Its pathway is amino-acid biosynthesis; D-alanine biosynthesis; D-alanine from L-alanine: step 1/1. In terms of biological role, catalyzes the interconversion of L-alanine and D-alanine. May also act on other amino acids. The protein is Alanine racemase (alr) of Francisella philomiragia subsp. philomiragia (strain ATCC 25017 / CCUG 19701 / FSC 153 / O#319-036).